Here is a 159-residue protein sequence, read N- to C-terminus: Phosphopantetheine adenylyltransferase (159 aa).

T9 is a binding site for substrate. Residues 9-10 and H17 each bind ATP; that span reads TF. The substrate site is built by K41, L73, and R87. ATP is bound by residues 88–90, E98, and 123–129; these read GLR and YSFISST.

This sequence belongs to the bacterial CoaD family. Homohexamer. Mg(2+) serves as cofactor.

It localises to the cytoplasm. The catalysed reaction is (R)-4'-phosphopantetheine + ATP + H(+) = 3'-dephospho-CoA + diphosphate. The protein operates within cofactor biosynthesis; coenzyme A biosynthesis; CoA from (R)-pantothenate: step 4/5. Reversibly transfers an adenylyl group from ATP to 4'-phosphopantetheine, yielding dephospho-CoA (dPCoA) and pyrophosphate. In Pseudomonas putida (strain GB-1), this protein is Phosphopantetheine adenylyltransferase.